Reading from the N-terminus, the 89-residue chain is DNA-directed RNA polymerase subunit omega (89 aa).

It belongs to the RNA polymerase subunit omega family. As to quaternary structure, the RNAP catalytic core consists of 2 alpha, 1 beta, 1 beta' and 1 omega subunit. When a sigma factor is associated with the core the holoenzyme is formed, which can initiate transcription.

The enzyme catalyses RNA(n) + a ribonucleoside 5'-triphosphate = RNA(n+1) + diphosphate. Promotes RNA polymerase assembly. Latches the N- and C-terminal regions of the beta' subunit thereby facilitating its interaction with the beta and alpha subunits. This is DNA-directed RNA polymerase subunit omega (rpoZ) from Pasteurella multocida (strain Pm70).